The sequence spans 142 residues: Large ribosomal subunit protein uL13 (142 aa).

This sequence belongs to the universal ribosomal protein uL13 family. Part of the 50S ribosomal subunit.

This protein is one of the early assembly proteins of the 50S ribosomal subunit, although it is not seen to bind rRNA by itself. It is important during the early stages of 50S assembly. The chain is Large ribosomal subunit protein uL13 from Xylella fastidiosa (strain 9a5c).